The following is a 21-amino-acid chain: Ferredoxin (21 aa).

In terms of domain architecture, 4Fe-4S ferredoxin-type spans 2-21; it reads KVKVDADACIGCGVCVELCP. Positions 10, 13, and 16 each coordinate [4Fe-4S] cluster.

As to quaternary structure, monomer. Requires [4Fe-4S] cluster as cofactor.

Its function is as follows. Ferredoxins are iron-sulfur proteins that transfer electrons in a wide variety of metabolic reactions. The protein is Ferredoxin (fdxA) of Pyrococcus woesei.